The chain runs to 684 residues: Agnestins biosynthesis cluster transcription factor AgnL11 (684 aa).

Positions 25 to 51 (CHFCRTKKLKCDRRFPCSNCRARRLSC) form a DNA-binding region, zn(2)-C6 fungal-type. Positions 76–103 (NEELSENINELKARLQRLEELISVNAEE) form a coiled coil. Positions 601–644 (KGSASARKDKNPIHGDTDRATPPGSSNLPQHDKSSSSSPAPPVW) are disordered. The segment covering 606-619 (ARKDKNPIHGDTDR) has biased composition (basic and acidic residues).

The protein resides in the nucleus. Transcription factor that regulates the expression of the gene cluster that mediates the biosynthesis of agnestins, dihydroxy-xanthone metabolites. The chain is Agnestins biosynthesis cluster transcription factor AgnL11 from Paecilomyces divaricatus (Penicillium divaricatum).